The primary structure comprises 223 residues: DnaJ homolog subfamily B member 9 (223 aa).

A signal peptide spans 1–23 (MATPQSIFIFAICILMITELILA). One can recognise a J domain in the interval 26–90 (SYYDILGVPK…NRRKEYDTLG (65 aa)). A divergent targeting domain region spans residues 91-223 (HSAFTNGKGQ…VTTYTDCSGQ (133 aa)). A Phosphoserine modification is found at Ser-133.

As to quaternary structure, interacts with HSPA5/BiP; interaction is direct. Interacts with ERN1/IRE1 (via the luminal region). Interacts with DERL1.

It is found in the endoplasmic reticulum lumen. Functionally, co-chaperone for Hsp70 protein HSPA5/BiP that acts as a key repressor of the ERN1/IRE1-mediated unfolded protein response (UPR). J domain-containing co-chaperones stimulate the ATPase activity of Hsp70 proteins and are required for efficient substrate recognition by Hsp70 proteins. In the unstressed endoplasmic reticulum, interacts with the luminal region of ERN1/IRE1 and selectively recruits HSPA5/BiP: HSPA5/BiP disrupts the dimerization of the active ERN1/IRE1 luminal region, thereby inactivating ERN1/IRE1. Also involved in endoplasmic reticulum-associated degradation (ERAD) of misfolded proteins. Required for survival of B-cell progenitors and normal antibody production. The polypeptide is DnaJ homolog subfamily B member 9 (Pongo abelii (Sumatran orangutan)).